Here is a 95-residue protein sequence, read N- to C-terminus: Aspartyl/glutamyl-tRNA(Asn/Gln) amidotransferase subunit C (95 aa).

Basic and acidic residues predominate over residues 55-67 (ALERRNVTREDQV). Residues 55-83 (ALERRNVTREDQVHNSLTNDKALENAPET) are disordered.

It belongs to the GatC family. As to quaternary structure, heterotrimer of A, B and C subunits.

The enzyme catalyses L-glutamyl-tRNA(Gln) + L-glutamine + ATP + H2O = L-glutaminyl-tRNA(Gln) + L-glutamate + ADP + phosphate + H(+). The catalysed reaction is L-aspartyl-tRNA(Asn) + L-glutamine + ATP + H2O = L-asparaginyl-tRNA(Asn) + L-glutamate + ADP + phosphate + 2 H(+). Allows the formation of correctly charged Asn-tRNA(Asn) or Gln-tRNA(Gln) through the transamidation of misacylated Asp-tRNA(Asn) or Glu-tRNA(Gln) in organisms which lack either or both of asparaginyl-tRNA or glutaminyl-tRNA synthetases. The reaction takes place in the presence of glutamine and ATP through an activated phospho-Asp-tRNA(Asn) or phospho-Glu-tRNA(Gln). This Natranaerobius thermophilus (strain ATCC BAA-1301 / DSM 18059 / JW/NM-WN-LF) protein is Aspartyl/glutamyl-tRNA(Asn/Gln) amidotransferase subunit C.